Here is a 95-residue protein sequence, read N- to C-terminus: Phosphoribosyl-ATP pyrophosphatase (95 aa).

Belongs to the PRA-PH family.

The protein localises to the cytoplasm. It catalyses the reaction 1-(5-phospho-beta-D-ribosyl)-ATP + H2O = 1-(5-phospho-beta-D-ribosyl)-5'-AMP + diphosphate + H(+). It functions in the pathway amino-acid biosynthesis; L-histidine biosynthesis; L-histidine from 5-phospho-alpha-D-ribose 1-diphosphate: step 2/9. This Sulfolobus acidocaldarius (strain ATCC 33909 / DSM 639 / JCM 8929 / NBRC 15157 / NCIMB 11770) protein is Phosphoribosyl-ATP pyrophosphatase.